We begin with the raw amino-acid sequence, 458 residues long: MLPSQSPAIFTVSRLNQTVRLLLEHEMGQVWISGEISNFTQPASGHWYFTLKDDTAQVRCAMFRNSNRRVTFRPQHGQQVLVRANITLYEPRGDYQIIVESMQPAGEGLLQLKYEQLKAKLQAEGLFDLQYKKSLPSPAHCVGVITSKTGAALHDILHVLKRRDPSLPVIIYPTAVQGDDAPGQIVRAIELANQRNECDVLIVGRGGGSLEDLWSFNDERVARAIFASRIPIVSAVGHETDVTIADFVADLRAPTPSAAAEVVSRNQQELLRQVQSTHQRLEMAMDYYLANRTRRFTQIHHRLQQQHPQLRLARQQTMLERLQKRMSFALESQLKRAGQQQQRLTRQLVQQNPQSRIHRAQTRIQQLEYRLAETLRAQLSATRERFGNAVTHLEAVSPLSTLARGYSVTSAADGAVLKQVKQVKVGETLTTRLGDGVVISEVSAVTKTRKSRKKTSNP.

Belongs to the XseA family. In terms of assembly, heterooligomer composed of large and small subunits.

It is found in the cytoplasm. The enzyme catalyses Exonucleolytic cleavage in either 5'- to 3'- or 3'- to 5'-direction to yield nucleoside 5'-phosphates.. Its function is as follows. Bidirectionally degrades single-stranded DNA into large acid-insoluble oligonucleotides, which are then degraded further into small acid-soluble oligonucleotides. The protein is Exodeoxyribonuclease 7 large subunit of Escherichia coli (strain UTI89 / UPEC).